A 357-amino-acid polypeptide reads, in one-letter code: Cobalt-precorrin-5B C(1)-methyltransferase (357 aa).

Belongs to the CbiD family.

It catalyses the reaction Co-precorrin-5B + S-adenosyl-L-methionine = Co-precorrin-6A + S-adenosyl-L-homocysteine. Its pathway is cofactor biosynthesis; adenosylcobalamin biosynthesis; cob(II)yrinate a,c-diamide from sirohydrochlorin (anaerobic route): step 6/10. Its function is as follows. Catalyzes the methylation of C-1 in cobalt-precorrin-5B to form cobalt-precorrin-6A. The protein is Cobalt-precorrin-5B C(1)-methyltransferase of Gloeobacter violaceus (strain ATCC 29082 / PCC 7421).